A 108-amino-acid chain; its full sequence is Nucleoid-associated protein CPS_3743 (108 aa).

The disordered stretch occupies residues 87 to 108 (NKDKMGALTGGMQLPPGMKMPF).

Belongs to the YbaB/EbfC family. As to quaternary structure, homodimer.

It localises to the cytoplasm. The protein resides in the nucleoid. Binds to DNA and alters its conformation. May be involved in regulation of gene expression, nucleoid organization and DNA protection. The protein is Nucleoid-associated protein CPS_3743 of Colwellia psychrerythraea (strain 34H / ATCC BAA-681) (Vibrio psychroerythus).